Consider the following 434-residue polypeptide: 3-phosphoshikimate 1-carboxyvinyltransferase (434 aa).

3-phosphoshikimate contacts are provided by K15, S16, and R20. K15 contacts phosphoenolpyruvate. Residues G96 and R124 each coordinate phosphoenolpyruvate. 5 residues coordinate 3-phosphoshikimate: S169, Q171, S195, D319, and K346. A phosphoenolpyruvate-binding site is contributed by Q171. Catalysis depends on D319, which acts as the Proton acceptor. Residues R350 and R394 each coordinate phosphoenolpyruvate.

The protein belongs to the EPSP synthase family. As to quaternary structure, monomer.

The protein resides in the cytoplasm. It carries out the reaction 3-phosphoshikimate + phosphoenolpyruvate = 5-O-(1-carboxyvinyl)-3-phosphoshikimate + phosphate. The protein operates within metabolic intermediate biosynthesis; chorismate biosynthesis; chorismate from D-erythrose 4-phosphate and phosphoenolpyruvate: step 6/7. In terms of biological role, catalyzes the transfer of the enolpyruvyl moiety of phosphoenolpyruvate (PEP) to the 5-hydroxyl of shikimate-3-phosphate (S3P) to produce enolpyruvyl shikimate-3-phosphate and inorganic phosphate. The chain is 3-phosphoshikimate 1-carboxyvinyltransferase from Chlorobium phaeobacteroides (strain DSM 266 / SMG 266 / 2430).